The sequence spans 944 residues: Probable UDP-N-acetylglucosamine--peptide N-acetylglucosaminyltransferase SPINDLY (944 aa).

TPR repeat units lie at residues 34–67 (GTDALRYANILRSRNKFADALQLYTTVLDKDGAN), 68–101 (VEALIGKGICLQAQSLPRQALDCFTEAVKVDPKN), 102–135 (ACALTHCGMIYKDEGHLVEAAEAYQKARSADPSY), 143–176 (AIVLTDLGTSLKLAGNTEDGIQKYCEALEVDSHY), 177–210 (APAYYNLGVVYSEMMQFDVALTCYEKAALERPLY), 211–244 (AEAYCNMGVIYKNRGELDAAIACYDRCLTISPNF), 252–285 (AIALTDLGTKVKIEGDINQGVAYYKKALFYNWHY), 286–319 (ADAMYNLGVAYGEMLNFEMAIVFYELALHFNPRC), 320–353 (AEACNNLGVIYKDRDNLDKAVECYQMALSIKPNF), 355–387 (QSLNNLGVVYTVQGKMDAAASMIEKAILANPTY), and 388–421 (AEAYNNLGVLYRDAGSITLSVQAYERCLQIDPDS). A catalytic region region spans residues 422–944 (RNAGQNRLLA…RCEANGHSSR (523 aa)). Residues 873–944 (NATAEEDNQS…RCEANGHSSR (72 aa)) form a disordered region. Polar residues predominate over residues 897-911 (PQPQIMVNGVTSPEG).

This sequence belongs to the glycosyltransferase 41 family. O-GlcNAc transferase subfamily. In terms of tissue distribution, expressed in all parts of plants, including immature leaf blade, leaf sheath, mature leaf blade, roots, germinating embryos and aleurone layers.

The protein resides in the nucleus. It catalyses the reaction L-seryl-[protein] + UDP-N-acetyl-alpha-D-glucosamine = 3-O-(N-acetyl-beta-D-glucosaminyl)-L-seryl-[protein] + UDP + H(+). The enzyme catalyses L-threonyl-[protein] + UDP-N-acetyl-alpha-D-glucosamine = 3-O-(N-acetyl-beta-D-glucosaminyl)-L-threonyl-[protein] + UDP + H(+). The protein operates within protein modification; protein glycosylation. In terms of biological role, probable O-linked N-acetylglucosamine transferase (OGT) involved in various processes such as gibberellin (GA) signaling pathway. OGTs catalyze the addition of nucleotide-activated sugars directly onto the polypeptide through O-glycosidic linkage with the hydroxyl of serine or threonine. Probably acts by adding O-linked sugars to yet unknown proteins. The polypeptide is Probable UDP-N-acetylglucosamine--peptide N-acetylglucosaminyltransferase SPINDLY (SPY) (Hordeum vulgare (Barley)).